We begin with the raw amino-acid sequence, 350 residues long: S-adenosylmethionine:tRNA ribosyltransferase-isomerase (350 aa).

This sequence belongs to the QueA family. In terms of assembly, monomer.

It localises to the cytoplasm. It carries out the reaction 7-aminomethyl-7-carbaguanosine(34) in tRNA + S-adenosyl-L-methionine = epoxyqueuosine(34) in tRNA + adenine + L-methionine + 2 H(+). The protein operates within tRNA modification; tRNA-queuosine biosynthesis. Transfers and isomerizes the ribose moiety from AdoMet to the 7-aminomethyl group of 7-deazaguanine (preQ1-tRNA) to give epoxyqueuosine (oQ-tRNA). The sequence is that of S-adenosylmethionine:tRNA ribosyltransferase-isomerase from Aliivibrio fischeri (strain MJ11) (Vibrio fischeri).